We begin with the raw amino-acid sequence, 123 residues long: Small ribosomal subunit protein uS13 (123 aa).

The segment covering Arg-99–Gly-113 has biased composition (basic residues). The tract at residues Arg-99–Lys-123 is disordered.

This sequence belongs to the universal ribosomal protein uS13 family. In terms of assembly, part of the 30S ribosomal subunit. Forms a loose heterodimer with protein S19. Forms two bridges to the 50S subunit in the 70S ribosome.

Located at the top of the head of the 30S subunit, it contacts several helices of the 16S rRNA. In the 70S ribosome it contacts the 23S rRNA (bridge B1a) and protein L5 of the 50S subunit (bridge B1b), connecting the 2 subunits; these bridges are implicated in subunit movement. Contacts the tRNAs in the A and P-sites. This chain is Small ribosomal subunit protein uS13, found in Anaplasma phagocytophilum (strain HZ).